We begin with the raw amino-acid sequence, 1404 residues long: DNA-directed RNA polymerase subunit beta' (1404 aa).

Residues Cys-70, Cys-72, Cys-85, and Cys-88 each coordinate Zn(2+). Mg(2+) contacts are provided by Asp-460, Asp-462, and Asp-464. Residues Cys-814, Cys-888, Cys-895, and Cys-898 each contribute to the Zn(2+) site.

It belongs to the RNA polymerase beta' chain family. The RNAP catalytic core consists of 2 alpha, 1 beta, 1 beta' and 1 omega subunit. When a sigma factor is associated with the core the holoenzyme is formed, which can initiate transcription. Mg(2+) is required as a cofactor. The cofactor is Zn(2+).

It catalyses the reaction RNA(n) + a ribonucleoside 5'-triphosphate = RNA(n+1) + diphosphate. DNA-dependent RNA polymerase catalyzes the transcription of DNA into RNA using the four ribonucleoside triphosphates as substrates. This chain is DNA-directed RNA polymerase subunit beta', found in Shewanella loihica (strain ATCC BAA-1088 / PV-4).